Here is a 542-residue protein sequence, read N- to C-terminus: MAAKDVKFHSDARERMLRGVDVLANAVKVTLGPKGRNVVIDKSFGAPRITKDGVTVAKEIELEDKFENMGAQMVREVASKTNDAAGDGTTTATVLTQAIVKEGAKAVASGMNPMDLKRGIDKAVEAIVEELKKNARKVTKNDEIAQVGTISANGDQEIGRFLAQAMEKVGNEGVITVEEAKTAETELEVVEGMQFDRGYLSPYFITNQEKMRVELDEPYLLIHEKKLASLQPLLPVLEAVVQSGKPLLIIAEDVEGEALATLVVNKLRGGLKVAAVKAPGFGDRRKAMLQDIAILTGGTAISEDLGIKLENVTLEMLGRAKKVVIEKENTTIVDGAGSKDEIQGRVNQIKAQIEETTSDYDREKLQERLAKLAGGVAVIRVGGATEVEVKERKDRVDDAMHATRAAVEEGLLPGGGVALLRAAKALDNVTGENEDQKVGISIVRRAIEAPIRQIAENAGAEGSIIVGRVREKPDFGYGWNAQTGEYGDLYQMGVIDPVKVVRAALQDAASVAGLLITTEAMVADRPKKETAPAMPAGAGMDF.

ATP-binding positions include 30 to 33, Lys51, 87 to 91, Gly415, and Asp496; these read TLGP and DGTTT.

It belongs to the chaperonin (HSP60) family. In terms of assembly, forms a cylinder of 14 subunits composed of two heptameric rings stacked back-to-back. Interacts with the co-chaperonin GroES.

It is found in the cytoplasm. The catalysed reaction is ATP + H2O + a folded polypeptide = ADP + phosphate + an unfolded polypeptide.. Together with its co-chaperonin GroES, plays an essential role in assisting protein folding. The GroEL-GroES system forms a nano-cage that allows encapsulation of the non-native substrate proteins and provides a physical environment optimized to promote and accelerate protein folding. In Chelativorans sp. (strain BNC1), this protein is Chaperonin GroEL 2.